The primary structure comprises 135 residues: Ribosomal RNA large subunit methyltransferase H (135 aa).

S-adenosyl-L-methionine-binding positions include Leu52, Gly83, and 102-107; that span reads LSSLTL.

It belongs to the RNA methyltransferase RlmH family. In terms of assembly, homodimer.

It is found in the cytoplasm. It carries out the reaction pseudouridine(1915) in 23S rRNA + S-adenosyl-L-methionine = N(3)-methylpseudouridine(1915) in 23S rRNA + S-adenosyl-L-homocysteine + H(+). Specifically methylates the pseudouridine at position 1915 (m3Psi1915) in 23S rRNA. In Polynucleobacter necessarius subsp. necessarius (strain STIR1), this protein is Ribosomal RNA large subunit methyltransferase H.